The chain runs to 728 residues: Protein Hook homolog 1 (728 aa).

M1 carries the post-translational modification N-acetylmethionine. Positions M1–E555 are sufficient for interaction with microtubules. Positions L12–A128 constitute a Calponin-homology (CH) domain. Coiled coils occupy residues P169–Q434 and L477–R658. The tract at residues P169–D444 is sufficient for homodimerization, interaction wit HOOK2, HOOK3 and AP4M1. The residue at position 235 (S235) is a Phosphoserine. The disordered stretch occupies residues Q481–L512. The segment covering M503–L512 has biased composition (basic and acidic residues). The interval F657–D728 is sufficient for interaction with AKTIP and VPS18. At T699 the chain carries Phosphothreonine. S719 and S727 each carry phosphoserine.

This sequence belongs to the hook family. As to quaternary structure, self-associates. Component of the FTS/Hook/FHIP complex (FHF complex), composed of AKTIP/FTS, FHIP1B, and one or more members of the Hook family of proteins HOOK1, HOOK2, and HOOK3. Interacts directly with AKTIP/FTS, HOOK2 and HOOK3. Associates with several subunits of the homotypic vesicular sorting complex (the HOPS complex) including VPS16, VPS18, VPS39 and VPS41; these interactions may be indirect. Interacts with CCDC181. Interacts (via coiled-coil region) with RIMBP3 (via C-terminus). Interacts with LRGUK (via guanylate kinase-like domain). Interacts with microtubules. May interact with CLN3. Interacts with AP4M1; the interaction is direct, mediates the interaction between FTS-Hook-FHIP (FHF) complex and AP-4 and the perinuclear distribution of AP-4.

The protein resides in the cytoplasm. It is found in the cytoskeleton. Functionally, component of the FTS/Hook/FHIP complex (FHF complex). The FHF complex may function to promote vesicle trafficking and/or fusion via the homotypic vesicular protein sorting complex (the HOPS complex). FHF complex promotes the distribution of AP-4 complex to the perinuclear area of the cell. Required for spermatid differentiation. Probably involved in the positioning of the microtubules of the manchette and the flagellum in relation to the membrane skeleton. The polypeptide is Protein Hook homolog 1 (Homo sapiens (Human)).